We begin with the raw amino-acid sequence, 239 residues long: Large ribosomal subunit protein uL2 (239 aa).

Disordered regions lie at residues 1-20 and 203-239; these read MGKS…FRSP and PFGG…GRRK. The span at 222–239 shows a compositional bias: basic residues; sequence PPGRKVGHIAARRTGRRK.

Belongs to the universal ribosomal protein uL2 family. In terms of assembly, part of the 50S ribosomal subunit. Forms a bridge to the 30S subunit in the 70S ribosome.

Functionally, one of the primary rRNA binding proteins. Required for association of the 30S and 50S subunits to form the 70S ribosome, for tRNA binding and peptide bond formation. It has been suggested to have peptidyltransferase activity; this is somewhat controversial. Makes several contacts with the 16S rRNA in the 70S ribosome. In Pyrococcus horikoshii (strain ATCC 700860 / DSM 12428 / JCM 9974 / NBRC 100139 / OT-3), this protein is Large ribosomal subunit protein uL2.